A 620-amino-acid chain; its full sequence is MAU2 chromatid cohesion factor homolog (620 aa).

TPR repeat units follow at residues 90 to 123 (FDTA…SQHN), 445 to 478 (GSFY…ANAE), and 485 to 518 (SCSL…ASKI).

This sequence belongs to the SCC4/mau-2 family. As to quaternary structure, component of the cohesin loading complex.

Its subcellular location is the nucleus. It localises to the nucleoplasm. Its function is as follows. Required for association of the cohesin complex with chromatin during interphase. Plays a role in sister chromatid cohesion and normal progression through prometaphase. The protein is MAU2 chromatid cohesion factor homolog of Aedes aegypti (Yellowfever mosquito).